A 274-amino-acid polypeptide reads, in one-letter code: 4-hydroxy-3-methylbut-2-enyl diphosphate reductase (274 aa).

C12 is a [4Fe-4S] cluster binding site. (2E)-4-hydroxy-3-methylbut-2-enyl diphosphate-binding residues include H36 and H70. Residues H36 and H70 each coordinate dimethylallyl diphosphate. H36 and H70 together coordinate isopentenyl diphosphate. [4Fe-4S] cluster is bound at residue C92. (2E)-4-hydroxy-3-methylbut-2-enyl diphosphate is bound at residue H120. H120 is a dimethylallyl diphosphate binding site. H120 contributes to the isopentenyl diphosphate binding site. The Proton donor role is filled by E122. (2E)-4-hydroxy-3-methylbut-2-enyl diphosphate is bound at residue T158. Residue C186 participates in [4Fe-4S] cluster binding. The (2E)-4-hydroxy-3-methylbut-2-enyl diphosphate site is built by S214, S215, N216, and S258. Residues S214, S215, N216, and S258 each coordinate dimethylallyl diphosphate. Positions 214, 215, 216, and 258 each coordinate isopentenyl diphosphate.

Belongs to the IspH family. It depends on [4Fe-4S] cluster as a cofactor.

The catalysed reaction is isopentenyl diphosphate + 2 oxidized [2Fe-2S]-[ferredoxin] + H2O = (2E)-4-hydroxy-3-methylbut-2-enyl diphosphate + 2 reduced [2Fe-2S]-[ferredoxin] + 2 H(+). It catalyses the reaction dimethylallyl diphosphate + 2 oxidized [2Fe-2S]-[ferredoxin] + H2O = (2E)-4-hydroxy-3-methylbut-2-enyl diphosphate + 2 reduced [2Fe-2S]-[ferredoxin] + 2 H(+). It functions in the pathway isoprenoid biosynthesis; dimethylallyl diphosphate biosynthesis; dimethylallyl diphosphate from (2E)-4-hydroxy-3-methylbutenyl diphosphate: step 1/1. Its pathway is isoprenoid biosynthesis; isopentenyl diphosphate biosynthesis via DXP pathway; isopentenyl diphosphate from 1-deoxy-D-xylulose 5-phosphate: step 6/6. Catalyzes the conversion of 1-hydroxy-2-methyl-2-(E)-butenyl 4-diphosphate (HMBPP) into a mixture of isopentenyl diphosphate (IPP) and dimethylallyl diphosphate (DMAPP). Acts in the terminal step of the DOXP/MEP pathway for isoprenoid precursor biosynthesis. The protein is 4-hydroxy-3-methylbut-2-enyl diphosphate reductase of Helicobacter pylori (strain Shi470).